A 239-amino-acid polypeptide reads, in one-letter code: 1-(5-phosphoribosyl)-5-[(5-phosphoribosylamino)methylideneamino] imidazole-4-carboxamide isomerase (239 aa).

Asp8 serves as the catalytic Proton acceptor. Asp129 acts as the Proton donor in catalysis.

It belongs to the HisA/HisF family.

It is found in the cytoplasm. It carries out the reaction 1-(5-phospho-beta-D-ribosyl)-5-[(5-phospho-beta-D-ribosylamino)methylideneamino]imidazole-4-carboxamide = 5-[(5-phospho-1-deoxy-D-ribulos-1-ylimino)methylamino]-1-(5-phospho-beta-D-ribosyl)imidazole-4-carboxamide. The protein operates within amino-acid biosynthesis; L-histidine biosynthesis; L-histidine from 5-phospho-alpha-D-ribose 1-diphosphate: step 4/9. This is 1-(5-phosphoribosyl)-5-[(5-phosphoribosylamino)methylideneamino] imidazole-4-carboxamide isomerase from Cereibacter sphaeroides (strain ATCC 17025 / ATH 2.4.3) (Rhodobacter sphaeroides).